Reading from the N-terminus, the 185-residue chain is 4-nitrophenol 4-monooxygenase/4-nitrocatechol 2-monooxygenase, reductase component (185 aa).

This sequence belongs to the non-flavoprotein flavin reductase family. As to quaternary structure, the 4-NP/4-NCA monooxygenase is composed of an oxygenase component NpcA and a reductase component NpcB.

It carries out the reaction 4-nitrophenol + NADH + O2 + H(+) = 4-nitrocatechol + NAD(+) + H2O. The enzyme catalyses 4-nitrocatechol + NADPH + O2 = 2-hydroxy-1,4-benzoquinone + nitrite + NADP(+) + H2O. It catalyses the reaction 4-nitrocatechol + NADH + O2 = 2-hydroxy-1,4-benzoquinone + nitrite + NAD(+) + H2O. It participates in aromatic compound metabolism. Its pathway is xenobiotic degradation. Its activity is regulated as follows. Inhibited by methimazole. In terms of biological role, involved in the degradation of para-nitrophenol (4-NP). Catalyzes both the initial hydroxylation of 4-NP to produce 4-nitrocatechol (4-NCA) and the subsequent oxidative release of the nitro group from 4-NCA to produce 2-hydroxy-1,4-benzoquinone. It can also use 4-nitroresorcinol as substrate with a rate of nitrite release similar to that observed with the two physiological substrates, 4-PN and 4-NCA. This is 4-nitrophenol 4-monooxygenase/4-nitrocatechol 2-monooxygenase, reductase component (npcB) from Rhodococcus opacus (Nocardia opaca).